A 430-amino-acid polypeptide reads, in one-letter code: Asparagine--tRNA ligase (430 aa).

Belongs to the class-II aminoacyl-tRNA synthetase family. In terms of assembly, homodimer.

The protein resides in the cytoplasm. It carries out the reaction tRNA(Asn) + L-asparagine + ATP = L-asparaginyl-tRNA(Asn) + AMP + diphosphate + H(+). This chain is Asparagine--tRNA ligase, found in Staphylococcus haemolyticus (strain JCSC1435).